The chain runs to 372 residues: Flagellar P-ring protein (372 aa).

The first 26 residues, Met1–Ala26, serve as a signal peptide directing secretion.

This sequence belongs to the FlgI family. The basal body constitutes a major portion of the flagellar organelle and consists of four rings (L,P,S, and M) mounted on a central rod.

It is found in the periplasm. Its subcellular location is the bacterial flagellum basal body. Functionally, assembles around the rod to form the L-ring and probably protects the motor/basal body from shearing forces during rotation. This chain is Flagellar P-ring protein, found in Xanthomonas campestris pv. campestris (strain B100).